The primary structure comprises 175 residues: Probable S-adenosyl-L-methionine-binding protein VirR (175 aa).

Positions L35 to P165 constitute a TsaA-like domain. S-adenosyl-L-methionine is bound by residues P52–Q54, H90–E91, R114, T124, and L145–T148.

It belongs to the tRNA methyltransferase O family.

This is Probable S-adenosyl-L-methionine-binding protein VirR (virR) from Rhizobium radiobacter (Agrobacterium tumefaciens).